A 179-amino-acid polypeptide reads, in one-letter code: MSTGSLSDVEDLQEVEMLECDGLKMDSNKEFVTSNESTEESSNCENGSPQKGRGGLGKRRKAPTKKSPLSGVSQEGKQVQRNAANARERARMRVLSKAFSRLKTTLPWVPPDTKLSKLDTLRLASSYIAHLRQILANDKYENGYIHPVNLTWPFMVAGKPESDLKEVVTASRLCGTTAS.

Positions 20–87 (CDGLKMDSNK…QVQRNAANAR (68 aa)) are disordered. A compositionally biased stretch (low complexity) spans 33–46 (TSNESTEESSNCEN). The span at 70-80 (SGVSQEGKQVQ) shows a compositional bias: polar residues. Residues 79 to 131 (VQRNAANARERARMRVLSKAFSRLKTTLPWVPPDTKLSKLDTLRLASSYIAHL) form the bHLH domain.

Efficient DNA binding requires dimerization with another bHLH protein. Forms a heterodimer with TCF3 and binds the E box (5'-CANNTG-3').

The protein localises to the nucleus. Involved in epithelial-mesenchymal interactions in kidney and lung morphogenesis that include epithelial differentiation and branching morphogenesis. May play a role in the specification or differentiation of one or more subsets of epicardial cell types. In Homo sapiens (Human), this protein is Transcription factor 21 (TCF21).